A 1108-amino-acid polypeptide reads, in one-letter code: Lon protease homolog, mitochondrial (1108 aa).

Residues 1–62 (MLRGQSLPWR…RAFSTSSIRR (62 aa)) constitute a mitochondrion transit peptide. Disordered stretches follow at residues 24-192 (PLLP…QKPS) and 299-318 (LPPGEQSKAGNTEDKAPEKK). Over residues 36-53 (RSNLSISRLSRSPSLSPR) the composition is skewed to low complexity. Basic and acidic residues-rich tracts occupy residues 78–103 (EQKDPNEQKDSDRSPEGRRRSPDSTG) and 119–146 (KVAGEKEQRGVEEDAKKENVSIEGKSDP). Residues 161-171 (SDTKSSASNGG) show a composition bias toward polar residues. Composition is skewed to basic and acidic residues over residues 174 to 188 (DGGRKGKKGSGDRAL) and 309 to 318 (NTEDKAPEKK). The Lon N-terminal domain maps to 200 to 452 (VMAIPIAKRP…KALVVLKKEL (253 aa)). 605–612 (GPPGVGKT) provides a ligand contact to ATP. Residues 821 to 855 (DKALTDEGKAAQEESKKETEEGDPKDPPADPEKST) are compositionally biased toward basic and acidic residues. The disordered stretch occupies residues 821-862 (DKALTDEGKAAQEESKKETEEGDPKDPPADPEKSTTETPRLA). The Lon proteolytic domain maps to 895-1081 (TFPPGVTMGL…SEVFNILFAE (187 aa)). Catalysis depends on residues serine 987 and lysine 1030.

It belongs to the peptidase S16 family. As to quaternary structure, homohexamer or homoheptamer. Organized in a ring with a central cavity.

It localises to the mitochondrion matrix. The enzyme catalyses Hydrolysis of proteins in presence of ATP.. Its function is as follows. ATP-dependent serine protease that mediates the selective degradation of misfolded, unassembled or oxidatively damaged polypeptides as well as certain short-lived regulatory proteins in the mitochondrial matrix. May also have a chaperone function in the assembly of inner membrane protein complexes. Participates in the regulation of mitochondrial gene expression and in the maintenance of the integrity of the mitochondrial genome. Binds to mitochondrial DNA in a site-specific manner. This chain is Lon protease homolog, mitochondrial (pim1), found in Aspergillus fumigatus (strain ATCC MYA-4609 / CBS 101355 / FGSC A1100 / Af293) (Neosartorya fumigata).